Here is a 230-residue protein sequence, read N- to C-terminus: Sugar fermentation stimulation protein homolog (230 aa).

The protein belongs to the SfsA family.

This chain is Sugar fermentation stimulation protein homolog, found in Caldivirga maquilingensis (strain ATCC 700844 / DSM 13496 / JCM 10307 / IC-167).